The primary structure comprises 471 residues: Ribosomal protein uS12 methylthiotransferase RimO (471 aa).

The region spanning 23-138 is the MTTase N-terminal domain; that stretch reads PKIGFVSLGC…VMDAVHVHVP (116 aa). Residues C32, C68, C97, C169, C173, and C176 each coordinate [4Fe-4S] cluster. Residues 155–396 enclose the Radical SAM core domain; sequence LTPRHYAYLK…MAVAEAVSAE (242 aa). Residues 399-471 enclose the TRAM domain; it reads RERVGAEMQV…QGHDLVGQPL (73 aa).

The protein belongs to the methylthiotransferase family. RimO subfamily. Requires [4Fe-4S] cluster as cofactor.

It localises to the cytoplasm. The catalysed reaction is L-aspartate(89)-[ribosomal protein uS12]-hydrogen + (sulfur carrier)-SH + AH2 + 2 S-adenosyl-L-methionine = 3-methylsulfanyl-L-aspartate(89)-[ribosomal protein uS12]-hydrogen + (sulfur carrier)-H + 5'-deoxyadenosine + L-methionine + A + S-adenosyl-L-homocysteine + 2 H(+). In terms of biological role, catalyzes the methylthiolation of an aspartic acid residue of ribosomal protein uS12. The polypeptide is Ribosomal protein uS12 methylthiotransferase RimO (Methylibium petroleiphilum (strain ATCC BAA-1232 / LMG 22953 / PM1)).